Reading from the N-terminus, the 461-residue chain is Metacaspase-1 (461 aa).

4 stretches are compositionally biased toward gly residues: residues 1-21 (MSYP…GYGG), 45-66 (QYGG…GYGP), 74-86 (QYGG…GYGP), and 105-119 (PGGQ…GHPG). The interval 1–154 (MSYPGQGGNT…PQGNQAFGGT (154 aa)) is disordered. Low complexity-rich tracts occupy residues 121-131 (GNQAPPGQYGQ) and 138-148 (HGNHNMPPQGN). Residues H252 and C308 contribute to the active site.

The protein belongs to the peptidase C14B family.

Functionally, involved in cell death (apoptosis). The chain is Metacaspase-1 (MCA1) from Yarrowia lipolytica (strain CLIB 122 / E 150) (Yeast).